The sequence spans 759 residues: Holliday junction resolvase YEN1 (759 aa).

Disordered regions lie at residues 62-83 (RSRS…SQEY), 498-518 (SQSP…TRRQ), and 683-702 (KSRT…KSRS). A compositionally biased stretch (low complexity) spans 500–512 (SPLKRSNSPSRSK). A phosphoserine mark is found at serine 730 and serine 731.

It belongs to the XPG/RAD2 endonuclease family. GEN subfamily.

The protein localises to the cytoplasm. It is found in the nucleus. Functionally, endonuclease which resolves Holliday junctions by the introduction of symmetrically related cuts across the junction point, to produce nicked duplex products in which the nicks can be readily ligated. Four-way DNA intermediates, also known as Holliday junctions, are formed during homologous recombination and DNA repair, and their resolution is necessary for proper chromosome segregation. Involved in DNA-damage repair in vegetative cells. The chain is Holliday junction resolvase YEN1 (YEN1) from Saccharomyces cerevisiae (strain ATCC 204508 / S288c) (Baker's yeast).